Here is a 225-residue protein sequence, read N- to C-terminus: Ribonuclease 3 (225 aa).

An RNase III domain is found at 7 to 129; sequence IPRLCRTLGY…IIGAVYLDSD (123 aa). Residue E42 participates in Mg(2+) binding. The active site involves D46. Mg(2+)-binding residues include D115 and E118. The active site involves E118. One can recognise a DRBM domain in the interval 155 to 225; it reads DPKTLLQELL…AAQALELIKR (71 aa).

The protein belongs to the ribonuclease III family. In terms of assembly, homodimer. Mg(2+) is required as a cofactor.

Its subcellular location is the cytoplasm. It carries out the reaction Endonucleolytic cleavage to 5'-phosphomonoester.. Digests double-stranded RNA. Involved in the processing of primary rRNA transcript to yield the immediate precursors to the large and small rRNAs (23S and 16S). Processes some mRNAs, and tRNAs when they are encoded in the rRNA operon. Processes pre-crRNA and tracrRNA of type II CRISPR loci if present in the organism. The polypeptide is Ribonuclease 3 (Shewanella woodyi (strain ATCC 51908 / MS32)).